We begin with the raw amino-acid sequence, 91 residues long: Large ribosomal subunit protein uL23 (91 aa).

Belongs to the universal ribosomal protein uL23 family. In terms of assembly, part of the 50S ribosomal subunit. Contacts protein L29.

Its function is as follows. Binds to 23S rRNA. One of the proteins that surrounds the polypeptide exit tunnel on the outside of the ribosome. The chain is Large ribosomal subunit protein uL23 from Staphylothermus marinus (strain ATCC 43588 / DSM 3639 / JCM 9404 / F1).